Here is a 332-residue protein sequence, read N- to C-terminus: Malate dehydrogenase 1, cytoplasmic (332 aa).

Residues 16–17 (QI) and aspartate 43 each bind NAD(+). Methionine sulfoxide is present on methionine 56. Glycine 90 lines the NAD(+) pocket. At methionine 97 the chain carries Methionine sulfoxide. Residue arginine 99 coordinates oxaloacetate. Glutamine 113 contributes to the NAD(+) binding site. Lysine 119 is covalently cross-linked (Glycyl lysine isopeptide (Lys-Gly) (interchain with G-Cter in ubiquitin)). Asparagine 132 contacts NAD(+). Oxaloacetate is bound by residues asparagine 132, arginine 163, histidine 188, and serine 243. Residue histidine 188 is the Proton acceptor of the active site.

This sequence belongs to the LDH/MDH superfamily. MDH type 2 family. In terms of assembly, forms a homodimer. Forms a disulfide-linked homodimer upon oxidation. Interacts with 14-3-3-like proteins GRF1 GRF3 and GRF8. Interacts with TRX1, TRX2, TRX3, TRX4 and TRX5. In terms of tissue distribution, expressed in rosette leaves.

The protein localises to the cytoplasm. The catalysed reaction is (S)-malate + NAD(+) = oxaloacetate + NADH + H(+). Its activity is regulated as follows. Decreased activity upon treatment with hydrogen peroxide. Catalyzes a reversible NAD-dependent dehydrogenase reaction involved in central metabolism and redox homeostasis between organellar compartments. The protein is Malate dehydrogenase 1, cytoplasmic (MDH1) of Arabidopsis thaliana (Mouse-ear cress).